The following is a 359-amino-acid chain: TGACG-sequence-specific DNA-binding protein TGA-1A (359 aa).

Positions 44-54 (KRLDNETEDTS) are enriched in basic and acidic residues. The segment at 44 to 72 (KRLDNETEDTSHGTVGTSNRYEPETSKPV) is disordered. The bZIP domain maps to 72-135 (VEKVLRRLAQ…GGVDASQLSY (64 aa)). The stretch at 73-125 (EKVLRRLAQNREAARKSRLRKKAYVQQLENSKLKLIQLEQELERARKQGMCVG) forms a coiled coil. The interval 74-94 (KVLRRLAQNREAARKSRLRKK) is basic motif. The segment at 100 to 114 (LENSKLKLIQLEQEL) is leucine-zipper. Residues 143–354 (TAVFDMEYGH…RVLSSQWATR (212 aa)) enclose the DOG1 domain.

This sequence belongs to the bZIP family. Binds DNA as a dimer.

The protein resides in the nucleus. Its function is as follows. Transcriptional activator that binds specifically to the DNA sequence 5'-TGACG-3'. Recognizes ocs elements like the as-1 motif of the cauliflower mosaic virus 35S promoter. Binding to the as-1-like cis elements mediate auxin- and salicylic acid-inducible transcription. Could also bind to the Hex-motif (5'-TGACGTGG-3') another cis-acting element found in plant histone promoters. The protein is TGACG-sequence-specific DNA-binding protein TGA-1A (TGA1A) of Nicotiana tabacum (Common tobacco).